The sequence spans 80 residues: Anaphase-promoting complex subunit hcn1 (80 aa).

M1 is modified (N-acetylmethionine). The tract at residues 26-54 (QTLDSESTTEEALQKNEESTRLSPEKKKI) is disordered. Basic and acidic residues predominate over residues 37-54 (ALQKNEESTRLSPEKKKI).

The APC/C is composed of at least 13 subunits: apc1, apc2, nuc2, apc4, apc5, cut9, apc8, apc10, apc11, hcn1, apc13, apc14 and apc15. Interacts directly (via N-terminus) with cut9.

In terms of biological role, component of the anaphase promoting complex/cyclosome (APC/C), a cell cycle-regulated E3 ubiquitin-protein ligase complex that controls progression through mitosis and the G1 phase of the cell cycle. The APC/C is thought to confer substrate specificity and, in the presence of ubiquitin-conjugating E2 enzymes, it catalyzes the formation of protein-ubiquitin conjugates that are subsequently degraded by the 26S proteasome. Has a role in assembling cut9 in the 20S APC/cyclosome. This chain is Anaphase-promoting complex subunit hcn1 (hcn1), found in Schizosaccharomyces pombe (strain 972 / ATCC 24843) (Fission yeast).